A 271-amino-acid chain; its full sequence is MSKLASPQSVRALLERHGLFADKRFGQNFLVSEAHLRRIVEAARPFTGPVFEVGPGLGALTRALLEAGAEVTAIEKDLRLRPVLEETLSGLPVRLVFQDALLYPWEEVPQGSLLVANLPYHIATPLVTRLLKTGRFARLVFLVQKEVAERMTARPKTPAYGVLTLRVAHHAVAERLFDLPPGAFFPPPKVWSSLVRLTPTGALDDPGLFRLVEAAFGKRRKTLLNALAAAGYPKARVEEALRALGLPPRVRAEELDLEAFRRLREGLEGAV.

The S-adenosyl-L-methionine site is built by Asn-28, Leu-30, Gly-54, Glu-75, Asp-99, and Asn-117.

Belongs to the class I-like SAM-binding methyltransferase superfamily. rRNA adenine N(6)-methyltransferase family. RsmA subfamily.

It is found in the cytoplasm. It catalyses the reaction adenosine(1518)/adenosine(1519) in 16S rRNA + 4 S-adenosyl-L-methionine = N(6)-dimethyladenosine(1518)/N(6)-dimethyladenosine(1519) in 16S rRNA + 4 S-adenosyl-L-homocysteine + 4 H(+). Functionally, specifically dimethylates two adjacent adenosines (A1518 and A1519) in the loop of a conserved hairpin near the 3'-end of 16S rRNA in the 30S particle. May play a critical role in biogenesis of 30S subunits. This chain is Ribosomal RNA small subunit methyltransferase A, found in Thermus thermophilus (strain ATCC 27634 / DSM 579 / HB8).